We begin with the raw amino-acid sequence, 73 residues long: Tetrahydromethanopterin S-methyltransferase subunit G (73 aa).

A helical transmembrane segment spans residues 48 to 68; sequence IGILYGAVVGLLLFLIYVSVS.

This sequence belongs to the MtrG family. As to quaternary structure, the complex is composed of 8 subunits; MtrA, MtrB, MtrC, MtrD, MtrE, MtrF, MtrG and MtrH.

Its subcellular location is the cell membrane. It catalyses the reaction 5-methyl-5,6,7,8-tetrahydromethanopterin + coenzyme M + 2 Na(+)(in) = 5,6,7,8-tetrahydromethanopterin + methyl-coenzyme M + 2 Na(+)(out). It functions in the pathway one-carbon metabolism; methanogenesis from CO(2); methyl-coenzyme M from 5,10-methylene-5,6,7,8-tetrahydromethanopterin: step 2/2. Functionally, part of a complex that catalyzes the formation of methyl-coenzyme M and tetrahydromethanopterin from coenzyme M and methyl-tetrahydromethanopterin. This is an energy-conserving, sodium-ion translocating step. The sequence is that of Tetrahydromethanopterin S-methyltransferase subunit G from Methanosarcina acetivorans (strain ATCC 35395 / DSM 2834 / JCM 12185 / C2A).